Here is a 52-residue protein sequence, read N- to C-terminus: Lysis protein for colicin N (52 aa).

The signal sequence occupies residues 1–17 (MCGKILLILFFIMTLSA). Cys-18 is lipidated: N-palmitoyl cysteine. The S-diacylglycerol cysteine moiety is linked to residue Cys-18.

The protein localises to the cell outer membrane. In terms of biological role, lysis proteins are required for both colicin release and partial cell lysis. This Escherichia coli protein is Lysis protein for colicin N (cnl).